A 147-amino-acid polypeptide reads, in one-letter code: Ribosome maturation factor RimP (147 aa).

It belongs to the RimP family.

Its subcellular location is the cytoplasm. Required for maturation of 30S ribosomal subunits. The polypeptide is Ribosome maturation factor RimP (Sulfurihydrogenibium azorense (strain DSM 15241 / OCM 825 / Az-Fu1)).